Here is a 217-residue protein sequence, read N- to C-terminus: Proteasome subunit beta type-9 (217 aa).

Positions 1 to 18 (MLEESSEPGWLSEEVKTG) are cleaved as a propeptide — removed in mature form. The active-site Nucleophile is the Thr19.

It belongs to the peptidase T1B family. In terms of assembly, the 26S proteasome consists of a 20S proteasome core and two 19S regulatory subunits. The 20S proteasome core is composed of 28 subunits that are arranged in four stacked rings, resulting in a barrel-shaped structure. The two end rings are each formed by seven alpha subunits, and the two central rings are each formed by seven beta subunits. The catalytic chamber with the active sites is on the inside of the barrel. Component of the immunoproteasome, where it displaces the equivalent housekeeping subunit PSMB6. In terms of processing, autocleaved. The resulting N-terminal Thr residue of the mature subunit is responsible for the nucleophile proteolytic activity.

Its subcellular location is the cytoplasm. It localises to the nucleus. The catalysed reaction is Cleavage of peptide bonds with very broad specificity.. Functionally, the proteasome is a multicatalytic proteinase complex which is characterized by its ability to cleave peptides with Arg, Phe, Tyr, Leu, and Glu adjacent to the leaving group at neutral or slightly basic pH. The proteasome has an ATP-dependent proteolytic activity. This subunit is involved in antigen processing to generate class I binding peptides. The chain is Proteasome subunit beta type-9 (psmb9-a) from Salmo salar (Atlantic salmon).